The following is a 511-amino-acid chain: Cytochrome P450 71A6 (511 aa).

Transmembrane regions (helical) follow at residues 1–15 and 61–77; these read ILIA…LFFL and VMQL…ASSP. 3 N-linked (GlcNAc...) asparagine glycosylation sites follow: Asn90, Asn96, and Asn167. Heme is bound at residue Cys450.

It belongs to the cytochrome P450 family. Requires heme as cofactor.

It localises to the membrane. The chain is Cytochrome P450 71A6 (CYP71A6) from Nepeta racemosa (Catmint).